The sequence spans 384 residues: Lipid-A-disaccharide synthase (384 aa).

The protein belongs to the LpxB family.

The enzyme catalyses a lipid X + a UDP-2-N,3-O-bis[(3R)-3-hydroxyacyl]-alpha-D-glucosamine = a lipid A disaccharide + UDP + H(+). It participates in bacterial outer membrane biogenesis; LPS lipid A biosynthesis. Its function is as follows. Condensation of UDP-2,3-diacylglucosamine and 2,3-diacylglucosamine-1-phosphate to form lipid A disaccharide, a precursor of lipid A, a phosphorylated glycolipid that anchors the lipopolysaccharide to the outer membrane of the cell. This chain is Lipid-A-disaccharide synthase, found in Geobacter sulfurreducens (strain ATCC 51573 / DSM 12127 / PCA).